We begin with the raw amino-acid sequence, 579 residues long: Nuclear hormone receptor family member nhr-47 (579 aa).

The segment at residues 8-83 (GTLCAVCDDI…VGMDKNSIQN (76 aa)) is a DNA-binding region (nuclear receptor). 2 NR C4-type zinc fingers span residues 11-31 (CAVC…CNGC) and 47-71 (CQGN…LQKC). Positions 87 to 128 (RIGYTKRKRRHDDNDMEGGVHHSEHIRDGSSGSPQMNDESPE) are disordered. Basic and acidic residues predominate over residues 104-114 (GGVHHSEHIRD). Positions 164–553 (ADLHSYATLE…SLVKETSLGP (390 aa)) constitute an NR LBD domain.

It belongs to the nuclear hormone receptor family.

The protein resides in the nucleus. Its function is as follows. Orphan nuclear receptor. This is Nuclear hormone receptor family member nhr-47 (nhr-47) from Caenorhabditis elegans.